Consider the following 174-residue polypeptide: UPF0340 protein SE_1711 (174 aa).

The protein belongs to the UPF0340 family.

The polypeptide is UPF0340 protein SE_1711 (Staphylococcus epidermidis (strain ATCC 12228 / FDA PCI 1200)).